A 408-amino-acid polypeptide reads, in one-letter code: Peptidase T (408 aa).

Histidine 78 serves as a coordination point for Zn(2+). The active site involves aspartate 80. Aspartate 140 lines the Zn(2+) pocket. Residue glutamate 173 is the Proton acceptor of the active site. Glutamate 174, aspartate 196, and histidine 379 together coordinate Zn(2+).

The protein belongs to the peptidase M20B family. It depends on Zn(2+) as a cofactor.

It is found in the cytoplasm. The enzyme catalyses Release of the N-terminal residue from a tripeptide.. Its function is as follows. Cleaves the N-terminal amino acid of tripeptides. The polypeptide is Peptidase T (Escherichia fergusonii (strain ATCC 35469 / DSM 13698 / CCUG 18766 / IAM 14443 / JCM 21226 / LMG 7866 / NBRC 102419 / NCTC 12128 / CDC 0568-73)).